A 236-amino-acid chain; its full sequence is MATPHINAVEGAFAETVLFPGDPLRAKYIAETFLENVEQVTDVRNMLGFTGTYKGKRISVMGSGMGIPSCSIYATELIKDYGVKNLIRVGTCGAISTDVKVRDVIIGMGACTDSQVNRLRFKGQDFAAIANYELMNAVIESAKVKGTKIRVGNVFSADLFYTPDPQMFDVMEKMGVLGVEMEAAGLYGVAHEFGARALCVVTVSDHIRTGEKTTSEERQTTFNDMIVMTLDAAITL.

Residue His-5 participates in a purine D-ribonucleoside binding. Phosphate-binding positions include Gly-21, Arg-25, Arg-44, and 88–91 (RVGT). A purine D-ribonucleoside is bound by residues 180 to 182 (EME) and 204 to 205 (SD). Asp-205 (proton donor) is an active-site residue.

Belongs to the PNP/UDP phosphorylase family. In terms of assembly, homohexamer; trimer of homodimers.

The enzyme catalyses a purine D-ribonucleoside + phosphate = a purine nucleobase + alpha-D-ribose 1-phosphate. The catalysed reaction is a purine 2'-deoxy-D-ribonucleoside + phosphate = a purine nucleobase + 2-deoxy-alpha-D-ribose 1-phosphate. In terms of biological role, catalyzes the reversible phosphorolytic breakdown of the N-glycosidic bond in the beta-(deoxy)ribonucleoside molecules, with the formation of the corresponding free purine bases and pentose-1-phosphate. The protein is Purine nucleoside phosphorylase DeoD-type 2 of Shewanella oneidensis (strain ATCC 700550 / JCM 31522 / CIP 106686 / LMG 19005 / NCIMB 14063 / MR-1).